A 149-amino-acid polypeptide reads, in one-letter code: 3-hydroxyacyl-[acyl-carrier-protein] dehydratase FabZ (149 aa).

The active site involves His-53.

Belongs to the thioester dehydratase family. FabZ subfamily.

Its subcellular location is the cytoplasm. It carries out the reaction a (3R)-hydroxyacyl-[ACP] = a (2E)-enoyl-[ACP] + H2O. Functionally, involved in unsaturated fatty acids biosynthesis. Catalyzes the dehydration of short chain beta-hydroxyacyl-ACPs and long chain saturated and unsaturated beta-hydroxyacyl-ACPs. In Polynucleobacter necessarius subsp. necessarius (strain STIR1), this protein is 3-hydroxyacyl-[acyl-carrier-protein] dehydratase FabZ.